The following is a 207-amino-acid chain: MVVGLLGNKIGMTQIFDESGNIIPVTILKVGPCVITQVKNQSKDGYDSIQIGYGNVLSKALTQPELGHLQKSNIQPLKYLKEFRINQETEFQIGQVLNVDSFTPGQLVNIQGKSIGKGFSGLQKRHNFTRGPMTHGSKNHRAPGSIGMGTTPGRVLPGKKMSGQLGNKITTIKKLKIIQINSEENILVIKGSVPGKPGNLLSIVPSA.

The tract at residues 129 to 148 (TRGPMTHGSKNHRAPGSIGM) is disordered.

The protein belongs to the universal ribosomal protein uL3 family. As to quaternary structure, part of the 50S ribosomal subunit.

The protein localises to the plastid. It localises to the chloroplast. In terms of biological role, one of the primary rRNA binding proteins, it binds directly near the 3'-end of the 23S rRNA, where it nucleates assembly of the 50S subunit. The sequence is that of Large ribosomal subunit protein uL3c (rpl3) from Phaeodactylum tricornutum (strain CCAP 1055/1).